A 410-amino-acid chain; its full sequence is MDLTGLLLDEEGTFSLAGFQDFTFLPGHQKLSARIRRRLYYGWDWEADCSLEELSSPVADIAVELLQKAAPSPIRRLQKKYVAHVSREACISPCAMMLALVYIERLRHRNPDYLQHVSSSDLFLISMMVASKYLYDEGEEEEVFNDEWGAAGGVAVPTLNALERGFLSAMDWHLYTDPREIFEVLSWLESCVAEQQGRRRGWYTYTDLCVLLEQPTWQLALGSLCQRLVKLSCLLAVAYVSSVALAVASVAVIHQSLGLSCTPTPGPPDLGLTSRCLLEPCIPSVPQCLPSPANVSSCLEGSTGLRSLWGSLLASLTPPPLPPPDPPAPPTPFHNCHLCQKLQRDSPTCHACHHPNRTAPTALSSPWYHTYGLAPPWPWSPVPASIPQPQQCSLFSIMELARLKSFIFPG.

The helical transmembrane segment at 233-253 threads the bilayer; sequence CLLAVAYVSSVALAVASVAVI.

It belongs to the CNPPD1 family.

Its subcellular location is the membrane. In Pongo abelii (Sumatran orangutan), this protein is Protein CNPPD1 (CNPPD1).